Reading from the N-terminus, the 98-residue chain is Large ribosomal subunit protein uL23 (98 aa).

Belongs to the universal ribosomal protein uL23 family. As to quaternary structure, part of the 50S ribosomal subunit. Contacts protein L29, and trigger factor when it is bound to the ribosome.

Functionally, one of the early assembly proteins it binds 23S rRNA. One of the proteins that surrounds the polypeptide exit tunnel on the outside of the ribosome. Forms the main docking site for trigger factor binding to the ribosome. This is Large ribosomal subunit protein uL23 from Alcanivorax borkumensis (strain ATCC 700651 / DSM 11573 / NCIMB 13689 / SK2).